The primary structure comprises 337 residues: Protein LEG1 homolog (337 aa).

The signal sequence occupies residues 1–20 (MAVLASWVWVLAGCFCAAVA). An N-linked (GlcNAc...) asparagine glycan is attached at Asn-171.

Belongs to the LEG1 family.

Its subcellular location is the secreted. Functionally, may be involved in early liver development. This is Protein LEG1 homolog from Mus musculus (Mouse).